An 866-amino-acid polypeptide reads, in one-letter code: Transcription factor E2F8 (866 aa).

Phosphoserine occurs at positions 71 and 102. 2 DNA-binding regions span residues 113–182 (RKEK…TWHG) and 261–347 (RKDK…KWTG). 3 disordered regions span residues 409-429 (RKINSAPSSPIKTHKAESTQN), 532-632 (TITP…STTL), and 794-837 (TNGQ…GSPC). Phosphoserine is present on residues serine 413 and serine 417. Positions 543–552 (VCPTTSSNAM) are enriched in polar residues. Composition is skewed to basic and acidic residues over residues 588 to 603 (QGAKNREREPAREKGS) and 612 to 624 (SGSKKKFKEDQKA). Over residues 794-805 (TNGQSFAGTGAQ) the composition is skewed to polar residues. The segment covering 825-834 (TPGGPTKPTG) has biased composition (low complexity).

Belongs to the E2F/DP family. In terms of assembly, homodimer and heterodimer: mainly forms homodimers and, to a lesser extent, heterodimers with E2F8. Dimerization is important for DNA-binding. Interacts with HIF1A.

The protein localises to the nucleus. In terms of biological role, atypical E2F transcription factor that participates in various processes such as angiogenesis and polyploidization of specialized cells. Mainly acts as a transcription repressor that binds DNA independently of DP proteins and specifically recognizes the E2 recognition site 5'-TTTC[CG]CGC-3'. Directly represses transcription of classical E2F transcription factors such as E2F1: component of a feedback loop in S phase by repressing the expression of E2F1, thereby preventing p53/TP53-dependent apoptosis. Plays a key role in polyploidization of cells in placenta and liver by regulating the endocycle, probably by repressing genes promoting cytokinesis and antagonizing action of classical E2F proteins (E2F1, E2F2 and/or E2F3). Required for placental development by promoting polyploidization of trophoblast giant cells. Acts as a promoter of sprouting angiogenesis, possibly by acting as a transcription activator: associates with HIF1A, recognizes and binds the VEGFA promoter, which is different from canonical E2 recognition site, and activates expression of the VEGFA gene. This Bos taurus (Bovine) protein is Transcription factor E2F8 (E2F8).